A 656-amino-acid chain; its full sequence is DNA ligase (656 aa).

NAD(+) is bound by residues 32–36 (DAIYD) and 81–82 (SL). Lysine 112 (N6-AMP-lysine intermediate) is an active-site residue. Residues arginine 133, glutamate 167, and lysine 306 each contribute to the NAD(+) site. Residues cysteine 400, cysteine 403, cysteine 416, and cysteine 421 each contribute to the Zn(2+) site. The region spanning 577 to 656 (KSSSVFNNKT…ELLKRLKELD (80 aa)) is the BRCT domain.

It belongs to the NAD-dependent DNA ligase family. LigA subfamily. It depends on Mg(2+) as a cofactor. Requires Mn(2+) as cofactor.

The enzyme catalyses NAD(+) + (deoxyribonucleotide)n-3'-hydroxyl + 5'-phospho-(deoxyribonucleotide)m = (deoxyribonucleotide)n+m + AMP + beta-nicotinamide D-nucleotide.. Functionally, DNA ligase that catalyzes the formation of phosphodiester linkages between 5'-phosphoryl and 3'-hydroxyl groups in double-stranded DNA using NAD as a coenzyme and as the energy source for the reaction. It is essential for DNA replication and repair of damaged DNA. The polypeptide is DNA ligase (Helicobacter pylori (strain ATCC 700392 / 26695) (Campylobacter pylori)).